The primary structure comprises 296 residues: Elongation factor Ts (296 aa).

Positions 82–85 are involved in Mg(2+) ion dislocation from EF-Tu; sequence TDFV.

The protein belongs to the EF-Ts family.

The protein resides in the cytoplasm. Associates with the EF-Tu.GDP complex and induces the exchange of GDP to GTP. It remains bound to the aminoacyl-tRNA.EF-Tu.GTP complex up to the GTP hydrolysis stage on the ribosome. This is Elongation factor Ts from Coxiella burnetii (strain CbuK_Q154) (Coxiella burnetii (strain Q154)).